Reading from the N-terminus, the 120-residue chain is Large ribosomal subunit protein uL24 (120 aa).

The interval 1 to 33 (MTRQPHKQRNRQERAALHEKQKQVRAPLSPELR) is disordered. The span at 10 to 22 (NRQERAALHEKQK) shows a compositional bias: basic and acidic residues.

Belongs to the universal ribosomal protein uL24 family. As to quaternary structure, part of the 50S ribosomal subunit.

In terms of biological role, one of two assembly initiator proteins, it binds directly to the 5'-end of the 23S rRNA, where it nucleates assembly of the 50S subunit. Functionally, located at the polypeptide exit tunnel on the outside of the subunit. This is Large ribosomal subunit protein uL24 from Natronomonas pharaonis (strain ATCC 35678 / DSM 2160 / CIP 103997 / JCM 8858 / NBRC 14720 / NCIMB 2260 / Gabara) (Halobacterium pharaonis).